Reading from the N-terminus, the 472-residue chain is Cysteine--tRNA ligase (472 aa).

Cys-29 contributes to the Zn(2+) binding site. Residues 31–41 carry the 'HIGH' region motif; it reads PTVYDFAHIGN. Zn(2+) contacts are provided by Cys-227, His-252, and Glu-256. The 'KMSKS' region motif lies at 285-289; that stretch reads KMSKS. Lys-288 serves as a coordination point for ATP.

Belongs to the class-I aminoacyl-tRNA synthetase family. Monomer. The cofactor is Zn(2+).

The protein localises to the cytoplasm. The catalysed reaction is tRNA(Cys) + L-cysteine + ATP = L-cysteinyl-tRNA(Cys) + AMP + diphosphate. This chain is Cysteine--tRNA ligase, found in Bradyrhizobium sp. (strain BTAi1 / ATCC BAA-1182).